A 147-amino-acid polypeptide reads, in one-letter code: MIAVIQRVNRSYVEVDGKVVGEIGKGLNILLGVVKGDTEEDIDKLIKKIPFLRIFEDENGKMNLSVIDIKGEALVISQFTLAGSVKKGRRPSFDNAEEPERAKELYQRFVERLSEYIPVKTGVFAAHMKVFIENDGPVTFIIDSKAL.

Residues 136-137 carry the Gly-cisPro motif, important for rejection of L-amino acids motif; that stretch reads GP.

Belongs to the DTD family. As to quaternary structure, homodimer.

It is found in the cytoplasm. It catalyses the reaction glycyl-tRNA(Ala) + H2O = tRNA(Ala) + glycine + H(+). The catalysed reaction is a D-aminoacyl-tRNA + H2O = a tRNA + a D-alpha-amino acid + H(+). In terms of biological role, an aminoacyl-tRNA editing enzyme that deacylates mischarged D-aminoacyl-tRNAs. Also deacylates mischarged glycyl-tRNA(Ala), protecting cells against glycine mischarging by AlaRS. Acts via tRNA-based rather than protein-based catalysis; rejects L-amino acids rather than detecting D-amino acids in the active site. By recycling D-aminoacyl-tRNA to D-amino acids and free tRNA molecules, this enzyme counteracts the toxicity associated with the formation of D-aminoacyl-tRNA entities in vivo and helps enforce protein L-homochirality. The chain is D-aminoacyl-tRNA deacylase from Persephonella marina (strain DSM 14350 / EX-H1).